The following is a 699-amino-acid chain: Pollen-specific leucine-rich repeat extensin-like protein 4 (699 aa).

The signal sequence occupies residues 1–39 (MPFYKQPWVFSKVFVLAMAKPPSFGCCFFLLFFSFLSSS). Asn-106 carries N-linked (GlcNAc...) asparagine glycosylation. 9 LRR repeats span residues 133–157 (VTVV…LGLM), 158–180 (TDVA…SFEK), 182–205 (KLMH…VLSW), 206–229 (PDVK…LFKK), 231–251 (LDAI…SLGE), 253–275 (PASV…IGNM), 276–299 (KNLN…IGKL), 301–323 (NVTV…FVGL), and 324–347 (TSVE…ICQL). N-linked (GlcNAc...) asparagine glycosylation is present at Asn-301. Asn-352 carries N-linked (GlcNAc...) asparagine glycosylation. Residues 411-699 (KCAGGSSTPS…SPPPPMFAGY (289 aa)) are disordered. 4 stretches are compositionally biased toward pro residues: residues 421–466 (KPSP…PVPT), 482–504 (KPSP…PQPD), 518–659 (PPPA…PPAP), and 690–699 (SPPPPMFAGY). The interval 517–699 (SPPPAPVNSP…SPPPPMFAGY (183 aa)) is contains the Ser-Pro(4) repeats.

Post-translationally, hydroxylated on proline residues in the S-P-P-P-P repeat. O-glycosylated on hydroxyprolines. As to expression, expressed in flowers, stamen, pollen, and pollinated carpels.

Its subcellular location is the secreted. It is found in the cell wall. Functionally, modulates cell morphogenesis by regulating cell wall formation and assembly, and/or growth polarization. This is Pollen-specific leucine-rich repeat extensin-like protein 4 (PEX4) from Arabidopsis thaliana (Mouse-ear cress).